We begin with the raw amino-acid sequence, 169 residues long: Dihydrofolate reductase type 8 (169 aa).

The DHFR domain occupies 3-169; it reads ELHAILAATA…FTYRKKELTE (167 aa).

The protein belongs to the dihydrofolate reductase family. In terms of assembly, homodimer.

The enzyme catalyses (6S)-5,6,7,8-tetrahydrofolate + NADP(+) = 7,8-dihydrofolate + NADPH + H(+). Its pathway is cofactor biosynthesis; tetrahydrofolate biosynthesis; 5,6,7,8-tetrahydrofolate from 7,8-dihydrofolate: step 1/1. Functionally, key enzyme in folate metabolism. Catalyzes an essential reaction for de novo glycine and purine synthesis, and for DNA precursor synthesis. The polypeptide is Dihydrofolate reductase type 8 (dhfrVIII) (Escherichia coli).